Here is a 310-residue protein sequence, read N- to C-terminus: Ribosomal RNA small subunit methyltransferase H (310 aa).

Residues 33–35 (AGH), Asp53, Phe79, Asp100, and Gln107 contribute to the S-adenosyl-L-methionine site.

The protein belongs to the methyltransferase superfamily. RsmH family.

It localises to the cytoplasm. It carries out the reaction cytidine(1402) in 16S rRNA + S-adenosyl-L-methionine = N(4)-methylcytidine(1402) in 16S rRNA + S-adenosyl-L-homocysteine + H(+). In terms of biological role, specifically methylates the N4 position of cytidine in position 1402 (C1402) of 16S rRNA. The polypeptide is Ribosomal RNA small subunit methyltransferase H (Clostridium beijerinckii (strain ATCC 51743 / NCIMB 8052) (Clostridium acetobutylicum)).